Consider the following 550-residue polypeptide: Parathyroid hormone 2 receptor (550 aa).

The first 24 residues, 1–24, serve as a signal peptide directing secretion; the sequence is MAGLGASLHVWGWLMLGSCLLARA. Topologically, residues 27 to 145 are extracellular; that stretch reads DSDGTITIEE…GKQEFFERLY (119 aa). 4 N-linked (GlcNAc...) asparagine glycosylation sites follow: asparagine 51, asparagine 106, asparagine 116, and asparagine 121. A helical membrane pass occupies residues 146 to 169; that stretch reads VMYTVGYSISFGSLAVAILIIGYF. Over 170-176 the chain is Cytoplasmic; sequence RRLHCTR. A helical membrane pass occupies residues 177-196; that stretch reads NYIHMHLFVSFMLRATSIFV. At 197–237 the chain is on the extracellular side; the sequence is KDRVVHAHIGVKELESLIMQDDPQNSIEATSVDKSQYIGCK. Residues 238–260 form a helical membrane-spanning segment; sequence IAVVMFIYFLATNYYWILVEGLY. Over 261 to 275 the chain is Cytoplasmic; sequence LHNLIFVAFFSDTKY. A helical transmembrane segment spans residues 276-297; sequence LWGFILIGWGFPAAFVAAWAVA. Residues 298-316 are Extracellular-facing; it reads RATLADARCWELSAGDIKW. The chain crosses the membrane as a helical span at residues 317–337; it reads IYQAPILAAIGLNFILFLNTV. Over 338 to 364 the chain is Cytoplasmic; the sequence is RVLATKIWETNAVGHDTRKQYRKLAKS. The helical transmembrane segment at 365-383 threads the bilayer; it reads TLVLVLVFGVHYIVFVCLP. Topologically, residues 384–394 are extracellular; it reads HSFTGLGWEIR. The helical transmembrane segment at 395–417 threads the bilayer; the sequence is MHCELFFNSFQGFFVSIIYCYCN. Over 418–550 the chain is Cytoplasmic; it reads GEVQAEVKKM…GCQGETEDVL (133 aa). The segment covering 511–531 has biased composition (basic and acidic residues); that stretch reads EETKEDSGRQGDDILMEKPSR. Residues 511 to 550 form a disordered region; it reads EETKEDSGRQGDDILMEKPSRPMESNPDTEGCQGETEDVL.

Belongs to the G-protein coupled receptor 2 family. As to quaternary structure, binds to TIPF39/TIP39. In terms of tissue distribution, expressed abundantly in brain and pancreas. Also expressed in the testis.

The protein resides in the cell membrane. Its function is as follows. This is a specific receptor for parathyroid hormone. The activity of this receptor is mediated by G proteins which activate adenylyl cyclase. PTH2R may be responsible for PTH effects in a number of physiological systems. It may play a significant role in pancreatic function. PTH2R presence in neurons indicates that it may function as a neurotransmitter receptor. The protein is Parathyroid hormone 2 receptor (PTH2R) of Homo sapiens (Human).